The chain runs to 64 residues: Translational regulator CsrA (64 aa).

This sequence belongs to the CsrA/RsmA family. In terms of assembly, homodimer; the beta-strands of each monomer intercalate to form a hydrophobic core, while the alpha-helices form wings that extend away from the core.

The protein resides in the cytoplasm. In terms of biological role, a key translational regulator that binds mRNA to regulate translation initiation and/or mRNA stability. Mediates global changes in gene expression, shifting from rapid growth to stress survival by linking envelope stress, the stringent response and the catabolite repression systems. Usually binds in the 5'-UTR; binding at or near the Shine-Dalgarno sequence prevents ribosome-binding, repressing translation, binding elsewhere in the 5'-UTR can activate translation and/or stabilize the mRNA. Its function is antagonized by small RNA(s). This chain is Translational regulator CsrA, found in Actinobacillus pleuropneumoniae serotype 5b (strain L20).